Reading from the N-terminus, the 116-residue chain is MSYISGARSLPDEQVRIASTKMDGIGPKKAIQLRYRLGISGNIKMNELTKYQIDQIEQMIAQDHVVHWELKRGERADIERLISISRYRGIRHQDGSPLRGQRTHTNARTARKQIRK.

Residues 92–116 (HQDGSPLRGQRTHTNARTARKQIRK) are disordered.

The protein belongs to the universal ribosomal protein uS13 family. In terms of assembly, part of the small ribosomal subunit.

Its subcellular location is the mitochondrion. Its function is as follows. Located at the top of the head of the small subunit, it contacts several helices of the 18S rRNA. This is Small ribosomal subunit protein uS13m (RPS13) from Triticum aestivum (Wheat).